A 393-amino-acid polypeptide reads, in one-letter code: uncharacterized protein (393 aa).

Residues 6 to 47 (KYDNKCAIHKEHKIKMICATCKDVVCNECILLDHNGHKFGRI) form a B box-type zinc finger. The Zn(2+) site is built by C11, H14, C34, and H39.

This is an uncharacterized protein from Dictyostelium discoideum (Social amoeba).